A 261-amino-acid chain; its full sequence is Proliferating cell nuclear antigen (261 aa).

N6-acetyllysine is present on residues lysine 14, lysine 77, and lysine 80. A DNA-binding region spans residues 61 to 80 (RCDRNLAMGVNLTSMSKILK). Cysteine 135 and cysteine 162 are disulfide-bonded. Residue lysine 164 forms a Glycyl lysine isopeptide (Lys-Gly) (interchain with G-Cter in SUMO2); alternate linkage. A Glycyl lysine isopeptide (Lys-Gly) (interchain with G-Cter in ubiquitin); alternate cross-link involves residue lysine 164. Residue tyrosine 211 is modified to Phosphotyrosine; by EGFR. Lysine 248 is modified (N6-acetyllysine). Residue lysine 254 forms a Glycyl lysine isopeptide (Lys-Gly) (interchain with G-Cter in SUMO2) linkage.

This sequence belongs to the PCNA family. In terms of assembly, homotrimer. Interacts with p300/EP300; the interaction occurs on chromatin in UV-irradiated damaged cells. Interacts with CREBBP (via transactivation domain and C-terminus); the interaction occurs on chromatin in UV-irradiated damaged cells. Directly interacts with POLD1, POLD3 and POLD4 subunits of the DNA polymerase delta complex, POLD3 being the major interacting partner; the interaction with POLD3 is inhibited by CDKN1A/p21(CIP1). Forms a complex with activator 1 heteropentamer in the presence of ATP. Interacts with EXO1, POLH, POLK, DNMT1, ERCC5, FEN1, CDC6 and POLDIP2. Interacts with POLB. Interacts with APEX2; this interaction is triggered by reactive oxygen species and increased by misincorporation of uracil in nuclear DNA. Forms a ternary complex with DNTTIP2 and core histone. Interacts with KCTD10. Interacts with PPP1R15A. Interacts with SMARCA5/SNF2H. Interacts with BAZ1B/WSTF; the interaction is direct and is required for BAZ1B/WSTF binding to replication foci during S phase. Interacts with HLTF and SHPRH. Interacts with NUDT15; this interaction is disrupted in response to UV irradiation and acetylation. Interacts with CDKN1A/p21(CIP1) and CDT1; interacts via their PIP-box which also recruits the DCX(DTL) complex. The interaction with CDKN1A inhibits POLD3 binding. Interacts with DDX11. Interacts with EGFR; positively regulates PCNA. Interacts with PARPBP. Interacts (when ubiquitinated) with SPRTN; leading to enhance RAD18-mediated PCNA ubiquitination. Interacts (when polyubiquitinated) with ZRANB3. Interacts with SMARCAD1. Interacts with CDKN1C. Interacts with PCLAF (via PIP-box). Interacts with RTEL1 (via PIP-box); the interaction is direct and essential for the suppression of telomere fragility. Interacts with FAM111A (via PIP-box); the interaction is direct and required for PCNA loading on chromatin binding. Interacts with LIG1. Interacts with SETMAR. Interacts with ANKRD17. Interacts with FBXO18/FBH1 (via PIP-box); the interaction recruits the DCX(DTL) complex and promotes ubiquitination and degradation of FBXO18/FBH1. Interacts with POLN. Interacts with SDE2 (via PIP-box); the interaction is direct and prevents ultraviolet light induced monoubiquitination. Component of the replisome complex composed of at least DONSON, MCM2, MCM7, PCNA and TICRR; interaction at least with PCNA occurs during DNA replication. Interacts with MAPK15; the interaction is chromatin binding dependent and prevents MDM2-mediated PCNA destruction by inhibiting the association of PCNA with MDM2. Interacts with PARP10 (via PIP-box). Interacts with DDI2. Interacts with HMCES (via PIP-box). Interacts with TRAIP (via PIP-box). Interacts with UHRF2. Interacts with ALKBH2; this interaction is enhanced during the S-phase of the cell cycle. Interacts with ATAD5; the interaction promotes USP1-mediated PCNA deubiquitination. Interacts (when phosphorylated) with GRB2. Interacts with ANG. Interacts with nuclear UNG; this interaction mediates UNG recruitment to S-phase replication foci. Interacts with ERCC6L2 (via an atypical PIP-box); this interaction facilitates cenrtomeric localization of ERCC6L2. Post-translationally, phosphorylated. Phosphorylation at Tyr-211 by EGFR stabilizes chromatin-associated PCNA. Acetylated by CREBBP and p300/EP300; preferentially acetylated by CREBBP on Lys-80, Lys-13 and Lys-14 and on Lys-77 by p300/EP300 upon loading on chromatin in response to UV irradiation. Lysine acetylation disrupts association with chromatin, hence promoting PCNA ubiquitination and proteasomal degradation in response to UV damage in a CREBBP- and EP300-dependent manner. Acetylation disrupts interaction with NUDT15 and promotes degradation. In terms of processing, ubiquitinated. Following DNA damage, can be either monoubiquitinated to stimulate direct bypass of DNA lesions by specialized DNA polymerases or polyubiquitinated to promote recombination-dependent DNA synthesis across DNA lesions by template switching mechanisms. Following induction of replication stress, monoubiquitinated by the UBE2B-RAD18 complex on Lys-164, leading to recruit translesion (TLS) polymerases, which are able to synthesize across DNA lesions in a potentially error-prone manner. An error-free pathway also exists and requires non-canonical polyubiquitination on Lys-164 through 'Lys-63' linkage of ubiquitin moieties by the E2 complex UBE2N-UBE2V2 and the E3 ligases, HLTF, RNF8 and SHPRH. This error-free pathway, also known as template switching, employs recombination mechanisms to synthesize across the lesion, using as a template the undamaged, newly synthesized strand of the sister chromatid. Monoubiquitination at Lys-164 also takes place in undamaged proliferating cells, and is mediated by the DCX(DTL) complex, leading to enhance PCNA-dependent translesion DNA synthesis. Sumoylated during S phase. Post-translationally, methylated on glutamate residues by ARMT1.

It is found in the nucleus. In terms of biological role, auxiliary protein of DNA polymerase delta and epsilon, is involved in the control of eukaryotic DNA replication by increasing the polymerase's processibility during elongation of the leading strand. Induces a robust stimulatory effect on the 3'-5' exonuclease and 3'-phosphodiesterase, but not apurinic-apyrimidinic (AP) endonuclease, APEX2 activities. Has to be loaded onto DNA in order to be able to stimulate APEX2. Plays a key role in DNA damage response (DDR) by being conveniently positioned at the replication fork to coordinate DNA replication with DNA repair and DNA damage tolerance pathways. Acts as a loading platform to recruit DDR proteins that allow completion of DNA replication after DNA damage and promote postreplication repair: Monoubiquitinated PCNA leads to recruitment of translesion (TLS) polymerases, while 'Lys-63'-linked polyubiquitination of PCNA is involved in error-free pathway and employs recombination mechanisms to synthesize across the lesion. The protein is Proliferating cell nuclear antigen (Pcna) of Mus musculus (Mouse).